The following is a 121-amino-acid chain: Large ribosomal subunit protein eL34B (121 aa).

Belongs to the eukaryotic ribosomal protein eL34 family. Component of the large ribosomal subunit (LSU). Mature yeast ribosomes consist of a small (40S) and a large (60S) subunit. The 40S small subunit contains 1 molecule of ribosomal RNA (18S rRNA) and 33 different proteins (encoded by 57 genes). The large 60S subunit contains 3 rRNA molecules (25S, 5.8S and 5S rRNA) and 46 different proteins (encoded by 81 genes).

The protein localises to the cytoplasm. Its function is as follows. Component of the ribosome, a large ribonucleoprotein complex responsible for the synthesis of proteins in the cell. The small ribosomal subunit (SSU) binds messenger RNAs (mRNAs) and translates the encoded message by selecting cognate aminoacyl-transfer RNA (tRNA) molecules. The large subunit (LSU) contains the ribosomal catalytic site termed the peptidyl transferase center (PTC), which catalyzes the formation of peptide bonds, thereby polymerizing the amino acids delivered by tRNAs into a polypeptide chain. The nascent polypeptides leave the ribosome through a tunnel in the LSU and interact with protein factors that function in enzymatic processing, targeting, and the membrane insertion of nascent chains at the exit of the ribosomal tunnel. The sequence is that of Large ribosomal subunit protein eL34B from Saccharomyces cerevisiae (strain ATCC 204508 / S288c) (Baker's yeast).